A 375-amino-acid chain; its full sequence is Decapping and exoribonuclease protein Rai1 (375 aa).

Substrate-binding positions include Arg43 and 120 to 122 (LRG). Positions 180, 222, 224, 247, and 248 each coordinate Mg(2+). Glu222 is a binding site for substrate. The substrate site is built by Lys249 and Gln274.

This sequence belongs to the DXO/Dom3Z family. Interacts with Rat1. The cofactor is Mg(2+).

It carries out the reaction a 5'-end triphospho-ribonucleoside in mRNA + H2O = a 5'-end phospho-ribonucleoside in mRNA + diphosphate + H(+). It catalyses the reaction a 5'-end NAD(+)-phospho-ribonucleoside in mRNA + H2O = a 5'-end phospho-ribonucleoside in mRNA + NAD(+) + H(+). The enzyme catalyses a 5'-end (N(7)-methyl 5'-triphosphoguanosine)-ribonucleoside-ribonucleotide in mRNA + H2O = a (N(7)-methyl 5'-triphosphoguanosine)-nucleoside + a 5'-end phospho-ribonucleoside in mRNA + H(+). Decapping enzyme for NAD-capped RNAs: specifically hydrolyzes the nicotinamide adenine dinucleotide (NAD) cap from a subset of RNAs by removing the entire NAD moiety from the 5'-end of an NAD-capped RNA. The NAD-cap is present at the 5'-end of some RNAs and snoRNAs. In contrast to the canonical 5'-end N7 methylguanosine (m7G) cap, the NAD cap promotes mRNA decay. Also acts as a non-canonical decapping enzyme that removes the entire cap structure of m7G capped or incompletely capped RNAs and mediates their subsequent degradation. Specifically degrades pre-mRNAs with a defective 5'-end m7G cap and is part of a pre-mRNA capping quality control. Possesses 5'-pyrophosphohydrolase activity, hydrolyzing the 5'-end triphosphate to release pyrophosphates, and 5'-3' exonuclease activity. May be involved in RNA degradation in the nucleus. The protein is Decapping and exoribonuclease protein Rai1 of Drosophila melanogaster (Fruit fly).